Reading from the N-terminus, the 279-residue chain is MPARKRFGQHWLRSEAILDRIVAAAELRPSDRVLEIGPGRGALTQRLLAAVDGLVAVELDRDLIGQLQQRFGQAENFCLLEGDILQLDWTAAIADRPRFANPSKVVANIPYNITGPILQSLLGTIAQPRRPAFERLVLLVQQEVADRLCATPGQRAYGALSVRVQYLASCERVCAVPPKSFSPPPKVQSTVICLKPRPWPQVCNNPGRLEKLLNQGFSAKRKMLRNNLKSLYSSEQIEAAFAAHQIAPEARAETLSIDQWIGLCTDLGDPTDSAINPTA.

Residues histidine 10, leucine 12, glycine 37, glutamate 58, aspartate 83, and asparagine 108 each coordinate S-adenosyl-L-methionine.

The protein belongs to the class I-like SAM-binding methyltransferase superfamily. rRNA adenine N(6)-methyltransferase family. RsmA subfamily.

It localises to the cytoplasm. The enzyme catalyses adenosine(1518)/adenosine(1519) in 16S rRNA + 4 S-adenosyl-L-methionine = N(6)-dimethyladenosine(1518)/N(6)-dimethyladenosine(1519) in 16S rRNA + 4 S-adenosyl-L-homocysteine + 4 H(+). Functionally, specifically dimethylates two adjacent adenosines (A1518 and A1519) in the loop of a conserved hairpin near the 3'-end of 16S rRNA in the 30S particle. May play a critical role in biogenesis of 30S subunits. The sequence is that of Ribosomal RNA small subunit methyltransferase A from Synechococcus elongatus (strain ATCC 33912 / PCC 7942 / FACHB-805) (Anacystis nidulans R2).